A 226-amino-acid polypeptide reads, in one-letter code: 3-dehydroquinate dehydratase (226 aa).

3-dehydroquinate-binding positions include Glu29–Arg31 and Arg56. The active-site Proton donor/acceptor is His120. The Schiff-base intermediate with substrate role is filled by Lys146. 3 residues coordinate 3-dehydroquinate: Arg187, Thr208, and Gln212.

Belongs to the type-I 3-dehydroquinase family. Homodimer.

It carries out the reaction 3-dehydroquinate = 3-dehydroshikimate + H2O. It participates in metabolic intermediate biosynthesis; chorismate biosynthesis; chorismate from D-erythrose 4-phosphate and phosphoenolpyruvate: step 3/7. Its function is as follows. Involved in the third step of the chorismate pathway, which leads to the biosynthesis of aromatic amino acids. Catalyzes the cis-dehydration of 3-dehydroquinate (DHQ) and introduces the first double bond of the aromatic ring to yield 3-dehydroshikimate. The polypeptide is 3-dehydroquinate dehydratase (Halobacterium salinarum (strain ATCC 700922 / JCM 11081 / NRC-1) (Halobacterium halobium)).